We begin with the raw amino-acid sequence, 934 residues long: Protein translocase subunit SecA (934 aa).

Residues Gln-87, 105-109 (GEGKT), and Asp-515 contribute to the ATP site. The Zn(2+) site is built by Cys-918, Cys-920, Cys-929, and His-930.

This sequence belongs to the SecA family. As to quaternary structure, monomer and homodimer. Part of the essential Sec protein translocation apparatus which comprises SecA, SecYEG and auxiliary proteins SecDF-YajC and YidC. The cofactor is Zn(2+).

Its subcellular location is the cell inner membrane. It is found in the cytoplasm. The catalysed reaction is ATP + H2O + cellular proteinSide 1 = ADP + phosphate + cellular proteinSide 2.. Part of the Sec protein translocase complex. Interacts with the SecYEG preprotein conducting channel. Has a central role in coupling the hydrolysis of ATP to the transfer of proteins into and across the cell membrane, serving both as a receptor for the preprotein-SecB complex and as an ATP-driven molecular motor driving the stepwise translocation of polypeptide chains across the membrane. The chain is Protein translocase subunit SecA from Ralstonia pickettii (strain 12J).